The chain runs to 134 residues: NADH-quinone oxidoreductase subunit A (134 aa).

3 helical membrane-spanning segments follow: residues 12-32 (FAIYVIGAIAICLTMIGLAAL), 64-84 (FYLVAMFFVIFDVEALYLFAW), and 93-113 (WVGFIEATIFIGLLLIGLVYL).

Belongs to the complex I subunit 3 family. NDH-1 is composed of 13 different subunits. Subunits NuoA, H, J, K, L, M, N constitute the membrane sector of the complex.

It is found in the cell inner membrane. It carries out the reaction a quinone + NADH + 5 H(+)(in) = a quinol + NAD(+) + 4 H(+)(out). Functionally, NDH-1 shuttles electrons from NADH, via FMN and iron-sulfur (Fe-S) centers, to quinones in the respiratory chain. The immediate electron acceptor for the enzyme in this species is believed to be ubiquinone. Couples the redox reaction to proton translocation (for every two electrons transferred, four hydrogen ions are translocated across the cytoplasmic membrane), and thus conserves the redox energy in a proton gradient. This Shewanella oneidensis (strain ATCC 700550 / JCM 31522 / CIP 106686 / LMG 19005 / NCIMB 14063 / MR-1) protein is NADH-quinone oxidoreductase subunit A.